A 196-amino-acid chain; its full sequence is dTTP/UTP pyrophosphatase (196 aa).

Catalysis depends on D76, which acts as the Proton acceptor.

The protein belongs to the Maf family. YhdE subfamily. A divalent metal cation serves as cofactor.

The protein localises to the cytoplasm. The catalysed reaction is dTTP + H2O = dTMP + diphosphate + H(+). The enzyme catalyses UTP + H2O = UMP + diphosphate + H(+). In terms of biological role, nucleoside triphosphate pyrophosphatase that hydrolyzes dTTP and UTP. May have a dual role in cell division arrest and in preventing the incorporation of modified nucleotides into cellular nucleic acids. The sequence is that of dTTP/UTP pyrophosphatase from Chlorobium chlorochromatii (strain CaD3).